A 97-amino-acid polypeptide reads, in one-letter code: Small ribosomal subunit protein bS20 (97 aa).

Belongs to the bacterial ribosomal protein bS20 family.

In terms of biological role, binds directly to 16S ribosomal RNA. This chain is Small ribosomal subunit protein bS20, found in Synechocystis sp. (strain ATCC 27184 / PCC 6803 / Kazusa).